Consider the following 142-residue polypeptide: Hemoglobin subunit alpha (142 aa).

The 141-residue stretch at 2–142 (VLSAADKTNV…VSTVLTSKYR (141 aa)) folds into the Globin domain. S4 bears the Phosphoserine mark. At K8 the chain carries N6-succinyllysine. At T9 the chain carries Phosphothreonine. K12 carries the N6-succinyllysine modification. An N6-acetyllysine; alternate modification is found at K17. An N6-succinyllysine; alternate modification is found at K17. Residue Y25 is modified to Phosphotyrosine. The residue at position 41 (K41) is an N6-succinyllysine. S50 carries the post-translational modification Phosphoserine. H59 serves as a coordination point for O2. H88 contributes to the heme b binding site. S103 carries the post-translational modification Phosphoserine. At T109 the chain carries Phosphothreonine. S125 and S132 each carry phosphoserine. Phosphothreonine occurs at positions 135 and 138. S139 bears the Phosphoserine mark.

Belongs to the globin family. As to quaternary structure, heterotetramer of two alpha chains and two beta chains. Red blood cells.

Involved in oxygen transport from the lung to the various peripheral tissues. In terms of biological role, hemopressin acts as an antagonist peptide of the cannabinoid receptor CNR1. Hemopressin-binding efficiently blocks cannabinoid receptor CNR1 and subsequent signaling. This is Hemoglobin subunit alpha (HBA) from Equus caballus (Horse).